The chain runs to 390 residues: Bifunctional enzyme IspD/IspF (390 aa).

Positions 1-229 (MAAGRGERAG…RQDHAVFPDI (229 aa)) are 2-C-methyl-D-erythritol 4-phosphate cytidylyltransferase. The interval 230–390 (RTGNGYDVHS…TVIYPGEVPE (161 aa)) is 2-C-methyl-D-erythritol 2,4-cyclodiphosphate synthase. 2 residues coordinate a divalent metal cation: Asp-236 and His-238. Residues 236–238 (DVH) and 262–263 (HS) contribute to the 4-CDP-2-C-methyl-D-erythritol 2-phosphate site. Residue His-270 participates in a divalent metal cation binding. 4-CDP-2-C-methyl-D-erythritol 2-phosphate is bound by residues 284–286 (DIG), 360–363 (TTNE), Phe-367, and Arg-370.

In the N-terminal section; belongs to the IspD/TarI cytidylyltransferase family. IspD subfamily. The protein in the C-terminal section; belongs to the IspF family. A divalent metal cation serves as cofactor.

The enzyme catalyses 2-C-methyl-D-erythritol 4-phosphate + CTP + H(+) = 4-CDP-2-C-methyl-D-erythritol + diphosphate. The catalysed reaction is 4-CDP-2-C-methyl-D-erythritol 2-phosphate = 2-C-methyl-D-erythritol 2,4-cyclic diphosphate + CMP. The protein operates within isoprenoid biosynthesis; isopentenyl diphosphate biosynthesis via DXP pathway; isopentenyl diphosphate from 1-deoxy-D-xylulose 5-phosphate: step 2/6. It participates in isoprenoid biosynthesis; isopentenyl diphosphate biosynthesis via DXP pathway; isopentenyl diphosphate from 1-deoxy-D-xylulose 5-phosphate: step 4/6. Its function is as follows. Bifunctional enzyme that catalyzes the formation of 4-diphosphocytidyl-2-C-methyl-D-erythritol from CTP and 2-C-methyl-D-erythritol 4-phosphate (MEP) (IspD), and catalyzes the conversion of 4-diphosphocytidyl-2-C-methyl-D-erythritol 2-phosphate (CDP-ME2P) to 2-C-methyl-D-erythritol 2,4-cyclodiphosphate (ME-CPP) with a corresponding release of cytidine 5-monophosphate (CMP) (IspF). The sequence is that of Bifunctional enzyme IspD/IspF from Brucella abortus biovar 1 (strain 9-941).